The following is an 849-amino-acid chain: Villin-1 (849 aa).

Gelsolin-like repeat units follow at residues 30–107 (IEKS…DKFL), 147–213 (RVTE…EDGK), 262–335 (VPVE…TVEF), 405–475 (QEQL…PEMF), and 527–566 (AIQV…DHNL). A disordered region spans residues 739 to 849 (ETPERSLRKS…AVATGTPRRR (111 aa)). 2 stretches are compositionally biased toward low complexity: residues 747 to 782 (KSSS…SAST) and 791 to 823 (PAAL…STPS).

The protein belongs to the villin/gelsolin family. In terms of tissue distribution, expressed in roots, young leaves, and inflorescences, mostly in the vasculature of roots, leaves, and filaments of the anthers. Also detected in guard cells.

The protein localises to the cytoplasm. It localises to the cytoskeleton. Functionally, ca(2+)-independent actin-binding protein. Binds actin microfilaments (MFs). Involved in actin filament bundling, severing and capping. Caps the barbed end of actin filaments and protects them from disassembly. Promotes VLN3-mediated MF severing. This chain is Villin-1, found in Oryza sativa subsp. japonica (Rice).